The following is a 53-amino-acid chain: Insulin (53 aa).

Positions 1-30 are cleaved as a propeptide — c peptide; sequence DVEPLLGFLSPKSGQENEVDDFPYKGQGEL. Cys38 and Cys43 form a disulfide bridge.

This sequence belongs to the insulin family. Heterodimer of a B chain and an A chain linked by two disulfide bonds.

The protein resides in the secreted. Insulin decreases blood glucose concentration. It increases cell permeability to monosaccharides, amino acids and fatty acids. It accelerates glycolysis, the pentose phosphate cycle, and glycogen synthesis in liver. This Anguilla anguilla (European freshwater eel) protein is Insulin (ins).